Reading from the N-terminus, the 170-residue chain is SKP1-like protein 16 (170 aa).

An interaction with the F-box domain of F-box proteins region spans residues 109–167 (ILAVNYLNVQDLLGLTCQTVADHMKDMSPEEVRELFNIENDYTPEEEDAIRKENAWAFE).

Belongs to the SKP1 family. As to quaternary structure, part of a SCF (SKP1-cullin-F-box) protein ligase complex. Interacts with CPR1/CPR30, At3g61590 and At4g11590. In terms of tissue distribution, mainly detected in the siliques.

It localises to the nucleus. Its pathway is protein modification; protein ubiquitination. Its function is as follows. Involved in ubiquitination and subsequent proteasomal degradation of target proteins. Together with CUL1, RBX1 and a F-box protein, it forms a SCF E3 ubiquitin ligase complex. The functional specificity of this complex depends on the type of F-box protein. In the SCF complex, it serves as an adapter that links the F-box protein to CUL1. The chain is SKP1-like protein 16 (ASK16) from Arabidopsis thaliana (Mouse-ear cress).